We begin with the raw amino-acid sequence, 330 residues long: Nodulation protein D 2 (330 aa).

In terms of domain architecture, HTH lysR-type spans 6-63; that stretch reads LDLNLLVALDALITERNLSSAARKINLSQPAMSAAVARLRKHFRDELFGMRGRELVLS. Residues 23 to 42 constitute a DNA-binding region (H-T-H motif); the sequence is LSSAARKINLSQPAMSAAVA. The disordered stretch occupies residues 308–330; that stretch reads RVTSSPEDAEPPGHFVRSVSPLP.

It belongs to the LysR transcriptional regulatory family.

Functionally, nodD regulates the expression of the nodABCFE genes which encode other nodulation proteins. NodD is also a negative regulator of its own expression. Binds flavonoids as inducers. The protein is Nodulation protein D 2 (nodD2) of Bradyrhizobium diazoefficiens (strain JCM 10833 / BCRC 13528 / IAM 13628 / NBRC 14792 / USDA 110).